A 373-amino-acid polypeptide reads, in one-letter code: SAM domain-containing protein SAMSN-1 (373 aa).

A disordered region spans residues 1–72 (MLKRKPSNVS…GGGLGKKMRA (72 aa)). An Important for interaction with 14-3-3 proteins motif is present at residues 20–25 (RSSSFG). Ser23 and Ser34 each carry phosphoserine. The span at 37-48 (KPDDSTEAHEGD) shows a compositional bias: basic and acidic residues. Residues 50-61 (TNGSGEQSKTSN) show a composition bias toward polar residues. Phosphoserine is present on Ser74. At Thr76 the chain carries Phosphothreonine. Ser90 and Ser119 each carry phosphoserine. The tract at residues 91–153 (EEKDEEDGEN…DGTSNRDSFR (63 aa)) is disordered. The segment covering 123 to 146 (SDSMDSLYSGQSSSSGITSCSDGT) has biased composition (low complexity). Tyr160 is subject to Phosphotyrosine. The SH3 domain occupies 163-224 (PFCGRARVHT…KFIYVDVISE (62 aa)). Residues 241–305 (KKSKTLQEFL…LSAAENFLEE (65 aa)) enclose the SAM domain. Positions 337 to 359 (DSGCYISSGNSDNGKEDLESENL) are disordered.

As to quaternary structure, interacts with FASLG. Interacts with phosphotyrosine containing proteins. Interacts (via SH3 domain) with CTTN. Interacts (phosphorylated at Ser-23) with YWHAB, YWHAE, YWHAG, YWHAH, YWHAZ and SFN. Interacts directly with SAP30 and HDAC1. Identified in a complex with SAP30 and HDAC1. In terms of tissue distribution, detected in peripheral blood B-cells (at protein level). Detected in spleen, liver and peripheral blood.

The protein localises to the nucleus. It is found in the cytoplasm. It localises to the cell projection. The protein resides in the ruffle. Its function is as follows. Negative regulator of B-cell activation. Down-regulates cell proliferation (in vitro). Promotes RAC1-dependent membrane ruffle formation and reorganization of the actin cytoskeleton. Regulates cell spreading and cell polarization. Stimulates HDAC1 activity. Regulates LYN activity by modulating its tyrosine phosphorylation. The chain is SAM domain-containing protein SAMSN-1 (SAMSN1) from Homo sapiens (Human).